The chain runs to 38 residues: Defensin-1 (38 aa).

3 disulfide bridges follow: cysteine 4-cysteine 25, cysteine 11-cysteine 33, and cysteine 15-cysteine 35.

The protein localises to the secreted. Functionally, has antibacterial activity against the Gram-positive bacteria L.lactis and S.aureus, and against the Gram-negative bacteria E.coli D32 and V.parahemolyticus. The sequence is that of Defensin-1 from Crassostrea virginica (Eastern oyster).